Reading from the N-terminus, the 65-residue chain is Large ribosomal subunit protein bL28 (65 aa).

A disordered region spans residues 1–21; sequence MPGRDQLTGQKALSGNKRSHA.

It belongs to the bacterial ribosomal protein bL28 family.

This Metamycoplasma arthritidis (strain 158L3-1) (Mycoplasma arthritidis) protein is Large ribosomal subunit protein bL28.